The chain runs to 99 residues: Cell division protein FtsB (99 aa).

The Cytoplasmic segment spans residues 1–3; it reads MKF. Residues 4-21 form a helical membrane-spanning segment; that stretch reads FVIALIVLLGLLQYRLWS. The Periplasmic portion of the chain corresponds to 22–99; sequence GSNSLPEYFV…GERSVSSPSQ (78 aa). Positions 36–73 form a coiled coil; sequence IAVQQEGNDKLNERNQVLKEEIIDLKSGTEAIEERARN.

It belongs to the FtsB family. In terms of assembly, part of a complex composed of FtsB, FtsL and FtsQ.

Its subcellular location is the cell inner membrane. Essential cell division protein. May link together the upstream cell division proteins, which are predominantly cytoplasmic, with the downstream cell division proteins, which are predominantly periplasmic. In Shewanella sp. (strain W3-18-1), this protein is Cell division protein FtsB.